We begin with the raw amino-acid sequence, 955 residues long: 2-oxoglutarate dehydrogenase E1 component (955 aa).

This sequence belongs to the alpha-ketoglutarate dehydrogenase family. In terms of assembly, homodimer. Part of the 2-oxoglutarate dehydrogenase (OGDH) complex composed of E1 (2-oxoglutarate dehydrogenase), E2 (dihydrolipoamide succinyltransferase) and E3 (dihydrolipoamide dehydrogenase); the complex contains multiple copies of the three enzymatic components (E1, E2 and E3). Thiamine diphosphate is required as a cofactor.

The enzyme catalyses N(6)-[(R)-lipoyl]-L-lysyl-[protein] + 2-oxoglutarate + H(+) = N(6)-[(R)-S(8)-succinyldihydrolipoyl]-L-lysyl-[protein] + CO2. Functionally, E1 component of the 2-oxoglutarate dehydrogenase (OGDH) complex which catalyzes the decarboxylation of 2-oxoglutarate, the first step in the conversion of 2-oxoglutarate to succinyl-CoA and CO(2). The polypeptide is 2-oxoglutarate dehydrogenase E1 component (Bacillus anthracis (strain A0248)).